Consider the following 195-residue polypeptide: Auxin-responsive protein IAA14 (195 aa).

Disordered regions lie at residues 1–61 and 85–107; these read MAAE…SPAS and STAA…NKGG. The EAR-like (transcriptional repression) signature appears at 10-14; that stretch reads LRLGL. The region spanning 108-191 is the PB1 domain; sequence GLYVKVSMDG…SCKKLRIMRG (84 aa).

The protein belongs to the Aux/IAA family. In terms of assembly, homodimers and heterodimers. As to expression, highly expressed in flowers. Expressed in etiolated seedlings.

The protein resides in the nucleus. Its function is as follows. Aux/IAA proteins are short-lived transcriptional factors that function as repressors of early auxin response genes at low auxin concentrations. This chain is Auxin-responsive protein IAA14 (IAA14), found in Oryza sativa subsp. japonica (Rice).